The following is a 260-amino-acid chain: Cytochrome c oxidase subunit 2 (260 aa).

The Mitochondrial intermembrane portion of the chain corresponds to 1–41 (MIVLKWLFFTISPCDAAEPWQLGFQDAATPIMQGIIDLHHD). A helical membrane pass occupies residues 42–62 (IFFFLILILVFVLWILVRALW). The Mitochondrial matrix portion of the chain corresponds to 63–86 (HFHYKKNAIPQRIVHGTTIEILWT). The helical transmembrane segment at 87 to 107 (IFPSIILMFIAIPSFALLYSM) threads the bilayer. The Mitochondrial intermembrane portion of the chain corresponds to 108 to 260 (DEVVVDPAIT…NQLIPQTGEA (153 aa)). Cu cation is bound by residues His187, Cys222, Glu224, Cys226, His230, and Met233. A Mg(2+)-binding site is contributed by Glu224.

Belongs to the cytochrome c oxidase subunit 2 family. As to quaternary structure, component of the cytochrome c oxidase (complex IV, CIV), a multisubunit enzyme composed of a catalytic core of 3 subunits and several supernumerary subunits. The complex exists as a monomer or a dimer and forms supercomplexes (SCs) in the inner mitochondrial membrane with ubiquinol-cytochrome c oxidoreductase (cytochrome b-c1 complex, complex III, CIII). Cu cation is required as a cofactor.

Its subcellular location is the mitochondrion inner membrane. The enzyme catalyses 4 Fe(II)-[cytochrome c] + O2 + 8 H(+)(in) = 4 Fe(III)-[cytochrome c] + 2 H2O + 4 H(+)(out). Component of the cytochrome c oxidase, the last enzyme in the mitochondrial electron transport chain which drives oxidative phosphorylation. The respiratory chain contains 3 multisubunit complexes succinate dehydrogenase (complex II, CII), ubiquinol-cytochrome c oxidoreductase (cytochrome b-c1 complex, complex III, CIII) and cytochrome c oxidase (complex IV, CIV), that cooperate to transfer electrons derived from NADH and succinate to molecular oxygen, creating an electrochemical gradient over the inner membrane that drives transmembrane transport and the ATP synthase. Cytochrome c oxidase is the component of the respiratory chain that catalyzes the reduction of oxygen to water. Electrons originating from reduced cytochrome c in the intermembrane space (IMS) are transferred via the dinuclear copper A center (CU(A)) of subunit 2 and heme A of subunit 1 to the active site in subunit 1, a binuclear center (BNC) formed by heme A3 and copper B (CU(B)). The BNC reduces molecular oxygen to 2 water molecules using 4 electrons from cytochrome c in the IMS and 4 protons from the mitochondrial matrix. In Arabidopsis thaliana (Mouse-ear cress), this protein is Cytochrome c oxidase subunit 2 (COX2).